The chain runs to 100 residues: NADH-quinone oxidoreductase subunit K (100 aa).

A run of 3 helical transmembrane segments spans residues 2–22, 29–49, and 60–80; these read IGLTHYLILASLVFVIGLVGI, IMLFFSSEILLNSANIALAAI, and IIAFFIVAIAASEVAVGLGLL.

It belongs to the complex I subunit 4L family. In terms of assembly, NDH-1 is composed of 14 different subunits. Subunits NuoA, H, J, K, L, M, N constitute the membrane sector of the complex.

It is found in the cell inner membrane. It carries out the reaction a quinone + NADH + 5 H(+)(in) = a quinol + NAD(+) + 4 H(+)(out). In terms of biological role, NDH-1 shuttles electrons from NADH, via FMN and iron-sulfur (Fe-S) centers, to quinones in the respiratory chain. The immediate electron acceptor for the enzyme in this species is believed to be ubiquinone. Couples the redox reaction to proton translocation (for every two electrons transferred, four hydrogen ions are translocated across the cytoplasmic membrane), and thus conserves the redox energy in a proton gradient. This chain is NADH-quinone oxidoreductase subunit K, found in Campylobacter concisus (strain 13826).